Here is a 1151-residue protein sequence, read N- to C-terminus: MDQDNNNHNDSNRLHPPDIHPNLGPQLWLNSSGDFDDNNNNNNNNNNNNSTRPQMPSRTRETATSERNASEVRDATLNNIFRFDSIQRETLLPTNNGQPLNQNFSLTFQPQQQTNALNGIDINTVNTNLMNGVNVQIDQLNRLLPNLPEEERKQIHEFKLIVGKKIQEFLVVIEKRRKKILNEIELDNLKLKELRIDNSPQAISYLHKLQRMRLRALETENMEIRNLRLKILTIIEEYKKSLYAYCHSKLRGQQVENPTDNFIIWINSIDTTESSDLKEGLQDLSRYSRQFINNVLSNPSNQNICTSVTRRSPVFALNMLPSEILHLILDKLNQKYDIVKFLTVSKLWAEIIVKILYYRPHINKKSQLDLFLRTMKLTSEETVFNYRLMIKRLNFSFVGDYMHDTELNYFVGCKNLERLTLVFCKHITSVPISAVLRGCKFLQSVDITGIRDVSDDVFDTLATYCPRVQGFYVPQARNVTFDSLRNFIVHSPMLKRIKITANNNMNDELVELLANKCPLLVEVDITLSPNVTDSSLLKLLTRLVQLREFRITHNTNITDNLFQELSKVVDDMPSLRLIDLSGCENITDKTIESIVNLAPKLRNVFLGKCSRITDASLFQLSKLGKNLQTVHFGHCFNITDNGVRALFHSCTRIQYVDFACCTNLTNRTLYELADLPKLKRIGLVKCTQMTDEGLLNMVSLRGRNDTLERVHLSYCSNLTIYPIYELLMSCPRLSHLSLTAVPSFLRPDITMYCRPAPSDFSENQRQIFCVFSGKGVHKLRHYLVNLTSPAFGPHVDVNDVLTKYIRSKNLIFNGETLEDALRRIITDLNQDSAAIIAATGLNQINGLNNDFLFQNINFERIDEVFSWYLNTFDGIRMSSEEVNSLLLQVNKTFCEDPFSDVDDDQDYVVAPGVNREINSEMCHIVRKFHELNDHIDDFEVNVASLVRVQFQFTGFLLHEMTQTYMQMIELNRQICLVQKTVQESGNIDYQKGLLIWRLLFIDKFIMVVQKYKLSTVVLRLYLKDNITLLTRQRELLIAHQRSAWNNNNDNDANRNANNIVNIVSDAGANDTSNNETNNGNDDNETENPNFWRQFGNRMQISPDQMRNLQMGLRNQNMVRNNNNNTIDESMPDTAIDSQMDEASGTPDEDML.

The span at 1-18 (MDQDNNNHNDSNRLHPPD) shows a compositional bias: basic and acidic residues. The interval 1–72 (MDQDNNNHND…ATSERNASEV (72 aa)) is disordered. Over residues 38-49 (NNNNNNNNNNNN) the composition is skewed to low complexity. The span at 58–72 (RTRETATSERNASEV) shows a compositional bias: basic and acidic residues. Phosphoserine is present on residues Ser-199 and Ser-300. In terms of domain architecture, F-box spans 314–361 (VFALNMLPSEILHLILDKLNQKYDIVKFLTVSKLWAEIIVKILYYRPH). 13 LRR repeats span residues 399–423 (GDYM…TLVF), 424–449 (CKHI…DITG), 450–475 (IRDV…YVPQ), 476–501 (ARNV…KITA), 502–527 (NNNM…DITL), 528–553 (SPNV…RITH), 554–582 (NTNI…DLSG), 583–608 (CENI…FLGK), 609–634 (CSRI…HFGH), 635–660 (CFNI…DFAC), 661–685 (CTNL…GLVK), 686–714 (CTQM…HLSY), and 715–740 (CSNL…SLTA). Residues 1066–1080 (AGANDTSNNETNNGN) are compositionally biased toward low complexity. Disordered regions lie at residues 1066-1090 (AGAN…NPNF) and 1118-1151 (VRNN…EDML).

In terms of assembly, interacts with SKP1. Component of the probable SCF(GRR1) complex containing CDC53, SKP1, RBX1 and GRR1.

It localises to the membrane. It participates in protein modification; protein ubiquitination. Its function is as follows. Substrate recognition component of a SCF (SKP1-CUL1-F-box protein) E3 ubiquitin-protein ligase complex which mediates the ubiquitination and subsequent proteasomal degradation of target proteins. Recognizes and directs ubiquitination of phosphorylated CLN1, CLN2 and GIC2. Probably constitutes the primary response element required for the generation or interpretation of the signal that induces glucose repression. The chain is SCF E3 ubiquitin ligase complex F-box protein GRR1 (GRR1) from Saccharomyces cerevisiae (strain ATCC 204508 / S288c) (Baker's yeast).